We begin with the raw amino-acid sequence, 68 residues long: Cytotoxic linear peptide (68 aa).

The N-terminal stretch at 1-23 (MKTQFAILLIALVLFQMFSQSEA) is a signal peptide. Leu36 carries the post-translational modification Leucine amide. A propeptide spanning residues 40-68 (GLNELDDLDELFDGEISQADIDFLKELMS) is cleaved from the precursor.

It belongs to the non-disulfide-bridged peptide (NDBP) superfamily. Short antimicrobial peptide (group 4) family. Expressed by the venom gland.

Its subcellular location is the secreted. It is found in the target cell membrane. Functionally, amphipathic peptide that has antibacterial activities. The polypeptide is Cytotoxic linear peptide (Pandinus cavimanus (Tanzanian red clawed scorpion)).